The primary structure comprises 583 residues: Isocitrate dehydrogenase kinase/phosphatase (583 aa).

ATP is bound by residues 315 to 321 (APGIRGM) and Lys-336. Asp-371 is an active-site residue.

The protein belongs to the AceK family.

It localises to the cytoplasm. The catalysed reaction is L-seryl-[isocitrate dehydrogenase] + ATP = O-phospho-L-seryl-[isocitrate dehydrogenase] + ADP + H(+). Its function is as follows. Bifunctional enzyme which can phosphorylate or dephosphorylate isocitrate dehydrogenase (IDH) on a specific serine residue. This is a regulatory mechanism which enables bacteria to bypass the Krebs cycle via the glyoxylate shunt in response to the source of carbon. When bacteria are grown on glucose, IDH is fully active and unphosphorylated, but when grown on acetate or ethanol, the activity of IDH declines drastically concomitant with its phosphorylation. The protein is Isocitrate dehydrogenase kinase/phosphatase of Salmonella heidelberg (strain SL476).